The sequence spans 191 residues: Divergent paired-related homeobox (191 aa).

A compositionally biased stretch (basic and acidic residues) spans 1–15 (MPGSEDLRKGKDQMH). A disordered region spans residues 1–20 (MPGSEDLRKGKDQMHSHRKR). The segment at residues 16 to 75 (SHRKRTMFTKKQLEDLNILFNENPYPNPSLQKEMASKIDIHPTVLQVWFKNHRAKLKKAK) is a DNA-binding region (homeobox).

Belongs to the paired homeobox family.

It localises to the nucleus. In terms of biological role, transcription factor that acts as a repressor. This chain is Divergent paired-related homeobox, found in Homo sapiens (Human).